The primary structure comprises 1314 residues: Synergin gamma (1314 aa).

A coiled-coil region spans residues 115-155 (MQKQFAEEQQKRFEQQQKLLEEERKRRQFEEQKQKLRLLSS). The interval 178 to 199 (GFSRDAKMHPTPASHPKKPGPS) is disordered. The EH domain maps to 295-388 (NESLVPDAYK…QFPAAPIPTL (94 aa)). Positions 457 to 461 (DFQDF) match the DFXDF motif 1 motif. The tract at residues 460 to 498 (DFQDASKSGSLDDSFSDFQELPASSKTSNSQHGNSAPSL) is disordered. Residues 462 to 496 (QDASKSGSLDDSFSDFQELPASSKTSNSQHGNSAP) are compositionally biased toward polar residues. The residue at position 473 (serine 473) is a Phosphoserine. Position 513 is an N6-acetyllysine (lysine 513). Residues 518–786 (KGIAADKSSE…ADFHSSKFSS (269 aa)) are interaction with AP1G1. Position 580 is a phosphoserine (serine 580). The tract at residues 666-678 (LADDFGEFSLFGE) is interaction with AP1G1, AP1G2 and GGA1. The DFXDF motif 2 signature appears at 690–694 (DFADF). Serine 720 is subject to Phosphoserine. Residue lysine 744 is modified to N6-acetyllysine. Phosphoserine occurs at positions 752 and 772. A DFXDF motif 3 motif is present at residues 775 to 779 (DFADF). Phosphoserine is present on residues serine 812, serine 852, serine 855, serine 909, serine 919, and serine 935. Disordered regions lie at residues 972-1026 (PQTS…DFGE) and 1073-1102 (SLSL…NTLN). Residues 976 to 990 (EQKEYENRDYKDFTK) show a composition bias toward basic and acidic residues. The segment covering 1001–1019 (EATCPSPASSGASQETPNE) has biased composition (polar residues). Residues serine 1006, serine 1073, serine 1075, serine 1087, and serine 1098 each carry the phosphoserine modification. A Phosphothreonine modification is found at threonine 1100.

Self-associates. Interacts with GGA1 (via GAE domain). Interacts with GGA2 and GGA3. Interacts with AP1G1 (via GAE domain), a subunit of adapter protein complex AP-1. Interacts with AP1G2 (via GAE domain) a subunit of adapter protein complex AP-1. Component of the aftiphilin/p200/gamma-synergin complex, at least composed of AFTPH/aftiphilin, HEATR5B/p200a and SYNRG/gamma-synergin, which plays a role in the AP1G1/AP-1-mediated trafficking of transferrin from early to recycling endosomes. Within the complex interacts with AFTPH/aftiphilin and HEATR5B/p200a; the interactions are direct. Interacts (via EH domain) with SCAMP1.

The protein localises to the cytoplasm. It localises to the golgi apparatus. The protein resides in the trans-Golgi network membrane. It is found in the perinuclear region. Its subcellular location is the cytoplasmic vesicle. The protein localises to the clathrin-coated vesicle. In terms of biological role, plays a role in endocytosis and/or membrane trafficking at the trans-Golgi network (TGN). May act by linking the adapter protein complex AP-1 to other proteins. Component of clathrin-coated vesicles. Component of the aftiphilin/p200/gamma-synergin complex, which plays roles in AP1G1/AP-1-mediated protein trafficking including the trafficking of transferrin from early to recycling endosomes, and the membrane trafficking of furin and the lysosomal enzyme cathepsin D between the trans-Golgi network (TGN) and endosomes. This chain is Synergin gamma, found in Homo sapiens (Human).